Consider the following 1346-residue polypeptide: Toll-like receptor Tollo (1346 aa).

An N-terminal signal peptide occupies residues Met-1–Gly-21. Residues Ala-22–Pro-1021 lie on the Extracellular side of the membrane. 3 N-linked (GlcNAc...) asparagine glycosylation sites follow: Asn-63, Asn-112, and Asn-126. LRR repeat units lie at residues Leu-97 to Gly-120, Leu-124 to Asn-146, Phe-151 to Pro-174, Lys-176 to Ala-198, Gly-209 to Ala-232, Gly-234 to Gly-256, Leu-257 to Glu-280, Lys-282 to Glu-304, Ala-306 to Gly-330, Leu-331 to Pro-354, Leu-355 to Asp-378, Thr-380 to Gly-402, Lys-404 to Asn-426, Cys-427 to Val-450, Leu-452 to Gln-473, Leu-474 to Arg-497, Met-498 to Arg-521, Ser-523 to Glu-544, Pro-546 to Ile-568, Leu-570 to Ser-591, Leu-593 to Pro-614, Asn-615 to Lys-637, and Lys-638 to Leu-661. Asn-182 carries N-linked (GlcNAc...) asparagine glycosylation. Residue Asn-291 is glycosylated (N-linked (GlcNAc...) asparagine). N-linked (GlcNAc...) asparagine glycosylation occurs at Asn-426. N-linked (GlcNAc...) asparagine glycosylation is present at Asn-468. N-linked (GlcNAc...) asparagine glycosylation is present at Asn-505. N-linked (GlcNAc...) asparagine glycosylation is present at Asn-552. N-linked (GlcNAc...) asparagine glycosylation occurs at Asn-640. 4 cysteine pairs are disulfide-bonded: Cys-682–Cys-710, Cys-684–Cys-733, Cys-757–Cys-763, and Cys-761–Cys-776. LRR repeat units lie at residues Pro-790 to Gly-813, Arg-814 to Gly-837, Leu-838 to Gly-861, Asp-863 to His-885, Tyr-887 to Pro-909, and Leu-912 to Arg-938. N-linked (GlcNAc...) asparagine glycans are attached at residues Asn-823 and Asn-832. Cys-924 and Cys-950 form a disulfide bridge. Residues Asn-956 and Asn-1000 are each glycosylated (N-linked (GlcNAc...) asparagine). Residues Ile-1022–Ile-1042 form a helical membrane-spanning segment. Over Phe-1043–Met-1346 the chain is Cytoplasmic. Residues Lys-1074–Leu-1209 form the TIR domain. Residues His-1235–Met-1346 form a disordered region. Over residues Pro-1267–Gln-1300 the composition is skewed to low complexity.

Belongs to the Toll-like receptor family. In terms of assembly, may interact (via the extracellular domain) with 18w (via the extracellular domain).

Its subcellular location is the cell membrane. It localises to the apical cell membrane. In terms of biological role, toll-related receptor. Probably specific to larval innate immunity. Involved in the tracheal immune response of larvae to Gram-negative and perhaps Gram-positive bacteria; upon infection it negatively regulates the immune deficiency (Imd) signaling cascade specifically in the respiratory epithelium to prevent the overexpression of antimicrobial peptides (AMP). Involved in the NF-kappa-B-dependent apoptosis of unfit cells during cell competition. Involved in neuron-specific glycosylation. Positively controls the neuromuscular junction (NMJ) growth in presynaptic motorneurons, probably via the JNK pathway. During development of the peripheral nervous system, may function in the NF-kappa-B (rel) regulatory cascade to repress expression of the neuron-specific genes sc and ase in non-neuronal cells. Promotes heterophilic cell adhesion with 18w in vitro. May have a minor role in leg development. May be involved in determining the proximal cell fate in the wing, possibly by negatively regulating the Dpp signaling pathway. May also be involved in the Dpp signaling pathway in the eye. Possibly functions with 18w and Toll-6 during convergent extension, to help direct proper planar cell polarity, cell intercalation and axis elongation. This Drosophila melanogaster (Fruit fly) protein is Toll-like receptor Tollo.